Consider the following 103-residue polypeptide: Large ribosomal subunit protein bL21 (103 aa).

This sequence belongs to the bacterial ribosomal protein bL21 family. As to quaternary structure, part of the 50S ribosomal subunit. Contacts protein L20.

In terms of biological role, this protein binds to 23S rRNA in the presence of protein L20. In Ectopseudomonas mendocina (strain ymp) (Pseudomonas mendocina), this protein is Large ribosomal subunit protein bL21.